Consider the following 395-residue polypeptide: Acetate kinase (395 aa).

Mg(2+) is bound at residue Asn-7. Lys-14 is an ATP binding site. Residue Arg-88 coordinates substrate. Catalysis depends on Asp-145, which acts as the Proton donor/acceptor. Residues 205 to 209 (HLGNG), 279 to 281 (DFR), and 327 to 331 (GIGEN) each bind ATP. Residue Glu-381 coordinates Mg(2+).

Belongs to the acetokinase family. As to quaternary structure, homodimer. The cofactor is Mg(2+). Mn(2+) is required as a cofactor.

The protein localises to the cytoplasm. It carries out the reaction acetate + ATP = acetyl phosphate + ADP. Its pathway is metabolic intermediate biosynthesis; acetyl-CoA biosynthesis; acetyl-CoA from acetate: step 1/2. Functionally, catalyzes the formation of acetyl phosphate from acetate and ATP. Can also catalyze the reverse reaction. This is Acetate kinase from Campylobacter jejuni subsp. jejuni serotype O:6 (strain 81116 / NCTC 11828).